A 266-amino-acid polypeptide reads, in one-letter code: Large ribosomal subunit protein uL4 (266 aa).

This sequence belongs to the universal ribosomal protein uL4 family. As to quaternary structure, part of the 50S ribosomal subunit.

One of the primary rRNA binding proteins, this protein initially binds near the 5'-end of the 23S rRNA. It is important during the early stages of 50S assembly. It makes multiple contacts with different domains of the 23S rRNA in the assembled 50S subunit and ribosome. In terms of biological role, forms part of the polypeptide exit tunnel. In Sulfolobus acidocaldarius (strain ATCC 33909 / DSM 639 / JCM 8929 / NBRC 15157 / NCIMB 11770), this protein is Large ribosomal subunit protein uL4.